Here is a 546-residue protein sequence, read N- to C-terminus: Zinc finger and BTB domain-containing protein 7A (546 aa).

Residues 34–101 (CDVVILVEGQ…AYTATLTVST (68 aa)) form the BTB domain. The tract at residues 189–288 (QEDEEEPDCN…SFVPTGAEAE (100 aa)) is disordered. C2H2-type zinc fingers lie at residues 359 to 381 (QKCP…IRTH), 387 to 409 (YECN…MRKH), and 415 to 437 (YLCQ…MRVH). The C2H2-type 4; atypical zinc-finger motif lies at 443–467 (YQCDSCFKTFVRSDHLHRHLKKDGC). The tract at residues 463–546 (KKDGCNGIPS…AAEGSAPGPS (84 aa)) is disordered. Residues 534–546 (AGGAAEGSAPGPS) show a composition bias toward low complexity.

It localises to the nucleus. Its function is as follows. Transcription factor that represses the transcription of a wide range of genes involved in cell proliferation and differentiation. Directly and specifically binds to the consensus sequence 5'-[GA][CA]GACCCCCCCCC-3' and represses transcription both by regulating the organization of chromatin and through the direct recruitment of transcription factors to gene regulatory regions. May also play a role, independently of its transcriptional activity, in double-strand break repair via classical non-homologous end joining/cNHEJ and in alternative splicing. The protein is Zinc finger and BTB domain-containing protein 7A of Gallus gallus (Chicken).